The sequence spans 89 residues: uncharacterized protein (89 aa).

It to M.jannaschii MJ1436.

This is an uncharacterized protein from Methanothermobacter thermautotrophicus (strain ATCC 29096 / DSM 1053 / JCM 10044 / NBRC 100330 / Delta H) (Methanobacterium thermoautotrophicum).